Reading from the N-terminus, the 120-residue chain is Aspartate 1-decarboxylase (120 aa).

The active-site Schiff-base intermediate with substrate; via pyruvic acid is serine 25. Serine 25 bears the Pyruvic acid (Ser) mark. Substrate is bound at residue threonine 57. The active-site Proton donor is tyrosine 58. 73–75 (GAA) is a binding site for substrate.

It belongs to the PanD family. As to quaternary structure, heterooctamer of four alpha and four beta subunits. Requires pyruvate as cofactor. Is synthesized initially as an inactive proenzyme, which is activated by self-cleavage at a specific serine bond to produce a beta-subunit with a hydroxyl group at its C-terminus and an alpha-subunit with a pyruvoyl group at its N-terminus.

Its subcellular location is the cytoplasm. It carries out the reaction L-aspartate + H(+) = beta-alanine + CO2. It participates in cofactor biosynthesis; (R)-pantothenate biosynthesis; beta-alanine from L-aspartate: step 1/1. Catalyzes the pyruvoyl-dependent decarboxylation of aspartate to produce beta-alanine. The polypeptide is Aspartate 1-decarboxylase (Coprothermobacter proteolyticus (strain ATCC 35245 / DSM 5265 / OCM 4 / BT)).